Here is a 653-residue protein sequence, read N- to C-terminus: Exocyst complex component 7 (653 aa).

The interval 1 to 384 is SEC8 and ARHQ binding; the sequence is MIPPQEASAR…TKNKLPGLIT (384 aa). Coiled-coil stretches lie at residues 5-42 and 63-85; these read QEASARRREIEDKLKQEEETLSFIRDSLEKSDQLTKNM and VHKQTENLQRLQENVEKTLSCLD. A Phosphoserine modification is found at serine 133. Positions 238 to 272 are disordered; that stretch reads FRKSSSSSGVPYSPAIPNKRKDTPTKKPIKRPGRD.

It belongs to the EXO70 family. In terms of assembly, the exocyst complex is composed of EXOC1, EXOC2, EXOC3, EXOC4, EXOC5, EXOC6, EXOC7 and EXOC8. Interacts with ARHQ in a GTP-dependent manner. Interacts with RAB11FIP3.

The protein localises to the cytoplasm. It localises to the cytosol. Its subcellular location is the cell membrane. The protein resides in the midbody. It is found in the midbody ring. Functionally, component of the exocyst complex involved in the docking of exocytic vesicles with fusion sites on the plasma membrane. In adipocytes, plays a crucial role in targeting SLC2A4 vesicle to the plasma membrane in response to insulin, perhaps directing the vesicle to the precise site of fusion. It is required for neuron survival and plays an essential role in cortical development. This Rattus norvegicus (Rat) protein is Exocyst complex component 7 (Exoc7).